Here is a 591-residue protein sequence, read N- to C-terminus: Aspartate--tRNA(Asp/Asn) ligase (591 aa).

L-aspartate is bound at residue glutamate 174. Residues 198–201 form an aspartate region; sequence QLFK. Arginine 220 is an L-aspartate binding site. ATP is bound by residues 220 to 222 and glutamine 229; that span reads RDE. Residue histidine 450 coordinates L-aspartate. Residue glutamate 483 coordinates ATP. Arginine 490 contributes to the L-aspartate binding site. Position 535-538 (535-538) interacts with ATP; sequence GLDR.

Belongs to the class-II aminoacyl-tRNA synthetase family. Type 1 subfamily. As to quaternary structure, homodimer.

It localises to the cytoplasm. The enzyme catalyses tRNA(Asx) + L-aspartate + ATP = L-aspartyl-tRNA(Asx) + AMP + diphosphate. Its function is as follows. Aspartyl-tRNA synthetase with relaxed tRNA specificity since it is able to aspartylate not only its cognate tRNA(Asp) but also tRNA(Asn). Reaction proceeds in two steps: L-aspartate is first activated by ATP to form Asp-AMP and then transferred to the acceptor end of tRNA(Asp/Asn). The polypeptide is Aspartate--tRNA(Asp/Asn) ligase (Pseudomonas fluorescens (strain SBW25)).